Consider the following 263-residue polypeptide: MKPVTLSTLNRYKQEKKKFATITAYDASFARLFANEGIPAMLIGDSLGMTLQGHDSTLPVTVEQIAYHTRCVRAGAPNAFLIADMPFMSYSTPEQACLNAAILMQAGANMVKIEGGSWLIPTVKMLTERAVPVCIHLGLTPQSVNVFGGYKVQGREEAAAEQLKQDAMALEAAGAQLAVLECVPVSVAKTITGSLNIPVIGIGAGNVTDGQILVMHDLLGLTPNAPKFSKNFLQEAGSLPEAVRLYVQQVEQKLFPQEQHSFN.

Mg(2+) contacts are provided by Asp-45 and Asp-84. 3-methyl-2-oxobutanoate contacts are provided by residues 45–46 (DS), Asp-84, and Lys-112. Mg(2+) is bound at residue Glu-114. Glu-181 functions as the Proton acceptor in the catalytic mechanism.

This sequence belongs to the PanB family. Homodecamer; pentamer of dimers. The cofactor is Mg(2+).

It localises to the cytoplasm. The enzyme catalyses 3-methyl-2-oxobutanoate + (6R)-5,10-methylene-5,6,7,8-tetrahydrofolate + H2O = 2-dehydropantoate + (6S)-5,6,7,8-tetrahydrofolate. It participates in cofactor biosynthesis; (R)-pantothenate biosynthesis; (R)-pantoate from 3-methyl-2-oxobutanoate: step 1/2. Catalyzes the reversible reaction in which hydroxymethyl group from 5,10-methylenetetrahydrofolate is transferred onto alpha-ketoisovalerate to form ketopantoate. The sequence is that of 3-methyl-2-oxobutanoate hydroxymethyltransferase from Proteus mirabilis (strain HI4320).